The chain runs to 181 residues: Protein GrpE (181 aa).

Over residues 1-24 (MSEENIGENEVETPETEPSAEAEV) the composition is skewed to acidic residues. The segment at 1 to 26 (MSEENIGENEVETPETEPSAEAEVES) is disordered.

Belongs to the GrpE family. Homodimer.

It is found in the cytoplasm. Its function is as follows. Participates actively in the response to hyperosmotic and heat shock by preventing the aggregation of stress-denatured proteins, in association with DnaK and GrpE. It is the nucleotide exchange factor for DnaK and may function as a thermosensor. Unfolded proteins bind initially to DnaJ; upon interaction with the DnaJ-bound protein, DnaK hydrolyzes its bound ATP, resulting in the formation of a stable complex. GrpE releases ADP from DnaK; ATP binding to DnaK triggers the release of the substrate protein, thus completing the reaction cycle. Several rounds of ATP-dependent interactions between DnaJ, DnaK and GrpE are required for fully efficient folding. This chain is Protein GrpE, found in Rhizorhabdus wittichii (strain DSM 6014 / CCUG 31198 / JCM 15750 / NBRC 105917 / EY 4224 / RW1) (Sphingomonas wittichii).